The sequence spans 120 residues: Large ribosomal subunit protein bL17 (120 aa).

This sequence belongs to the bacterial ribosomal protein bL17 family. In terms of assembly, part of the 50S ribosomal subunit. Contacts protein L32.

The polypeptide is Large ribosomal subunit protein bL17 (Mycoplasmopsis pulmonis (strain UAB CTIP) (Mycoplasma pulmonis)).